The following is a 352-amino-acid chain: tRNA(Ile)-lysidine synthase (352 aa).

58–63 (SGGADS) lines the ATP pocket.

The protein belongs to the tRNA(Ile)-lysidine synthase family.

The protein localises to the cytoplasm. The enzyme catalyses cytidine(34) in tRNA(Ile2) + L-lysine + ATP = lysidine(34) in tRNA(Ile2) + AMP + diphosphate + H(+). Functionally, ligates lysine onto the cytidine present at position 34 of the AUA codon-specific tRNA(Ile) that contains the anticodon CAU, in an ATP-dependent manner. Cytidine is converted to lysidine, thus changing the amino acid specificity of the tRNA from methionine to isoleucine. The protein is tRNA(Ile)-lysidine synthase of Streptomyces coelicolor (strain ATCC BAA-471 / A3(2) / M145).